Consider the following 83-residue polypeptide: Small ribosomal subunit protein uS17 (83 aa).

This sequence belongs to the universal ribosomal protein uS17 family. Part of the 30S ribosomal subunit.

Its function is as follows. One of the primary rRNA binding proteins, it binds specifically to the 5'-end of 16S ribosomal RNA. This chain is Small ribosomal subunit protein uS17, found in Campylobacter jejuni subsp. jejuni serotype O:6 (strain 81116 / NCTC 11828).